The chain runs to 108 residues: uncharacterized protein (108 aa).

Cystine bridges form between cysteine 44-cysteine 82, cysteine 60-cysteine 78, and cysteine 63-cysteine 91.

This sequence belongs to the arthropod CHH/MIH/GIH/VIH hormone family.

This is an uncharacterized protein from Caenorhabditis elegans.